The primary structure comprises 373 residues: Ras association domain-containing protein 7 (373 aa).

A Ras-associating domain is found at 6-89 (AAMELKVWVD…VQFVLRRTGP (84 aa)). Residues 122-150 (CEPRKTLTPEPAPSLSRPGPAAPVTPTPG) are disordered. Coiled-coil stretches lie at residues 175-227 (WEQE…AAEA) and 248-297 (QERQ…QFIQ). A disordered region spans residues 300–356 (GAALPPPPRPDRGPPGTQGPLPPAREESLLGAPSESHAGAQPRPRGGPHDAELLEVA).

As to quaternary structure, interacts with MAP2K7 and GTP-bound NRAS. Post-translationally, polyubiquitinated and degraded by the proteasome upon prolonged stress stimuli.

The protein localises to the cytoplasm. The protein resides in the cytoskeleton. It localises to the microtubule organizing center. It is found in the centrosome. Functionally, negatively regulates stress-induced JNK activation and apoptosis by promoting MAP2K7 phosphorylation and inhibiting its ability to activate JNK. Following prolonged stress, anti-apoptotic effect stops because of degradation of RASSF7 protein via the ubiquitin-proteasome pathway. Required for the activation of AURKB and chromosomal congression during mitosis where it stimulates microtubule polymerization. This is Ras association domain-containing protein 7 (RASSF7) from Homo sapiens (Human).